Here is a 192-residue protein sequence, read N- to C-terminus: Probable GTP-binding protein EngB (192 aa).

One can recognise an EngB-type G domain in the interval 22–192; sequence QLPEIVFVGR…LLEQLAIYTG (171 aa). Residues 30-37, 57-61, 75-78, 142-145, and 172-174 each bind GTP; these read GRSNVGKS, GKTQL, DLPG, TKYD, and YSA. Ser37 and Thr59 together coordinate Mg(2+).

It belongs to the TRAFAC class TrmE-Era-EngA-EngB-Septin-like GTPase superfamily. EngB GTPase family. The cofactor is Mg(2+).

Necessary for normal cell division and for the maintenance of normal septation. In Chlorobium phaeobacteroides (strain BS1), this protein is Probable GTP-binding protein EngB.